A 150-amino-acid chain; its full sequence is Myeloid-derived growth factor homolog (150 aa).

The first 22 residues, 1–22 (MTFLKYLLILCTIFLMVTNSLS), serve as a signal peptide directing secretion.

Belongs to the MYDGF family.

Its subcellular location is the secreted. This chain is Myeloid-derived growth factor homolog, found in Dictyostelium discoideum (Social amoeba).